A 266-amino-acid chain; its full sequence is Ribosome-recycling factor, chloroplastic (266 aa).

Over residues 1-26 (MPPLHAVSPAAAAAPPRALSSAARVP) the composition is skewed to low complexity. The segment at 1-30 (MPPLHAVSPAAAAAPPRALSSAARVPQRPG) is disordered. A chloroplast-targeting transit peptide spans 1–74 (MPPLHAVSPA…SDKRAVLRHA (74 aa)). Coiled coils occupy residues 75–109 (TIEEIEAEKSVIEDQARERMEKAIETVQNNFNTVR) and 207–266 (VAIR…LMKI).

The protein belongs to the RRF family.

Its subcellular location is the plastid. It localises to the chloroplast. Its function is as follows. Responsible for the release of ribosomes from messenger RNA at the termination of chloroplastic protein biosynthesis. The polypeptide is Ribosome-recycling factor, chloroplastic (Oryza sativa subsp. indica (Rice)).